Here is a 147-residue protein sequence, read N- to C-terminus: Hemoglobin subunit epsilon (147 aa).

In terms of domain architecture, Globin spans 3 to 147 (HFTAEEKAAV…VAIALAHKYH (145 aa)). Phosphoserine is present on residues serine 14 and serine 51. Heme b is bound by residues histidine 64 and histidine 93.

This sequence belongs to the globin family. In terms of assembly, heterotetramer of two alpha chains and two epsilon chains in early embryonic hemoglobin Gower-2; two zeta chains and two epsilon chains in early embryonic hemoglobin Gower-1. Red blood cells.

Its function is as follows. The epsilon chain is a beta-type chain of early mammalian embryonic hemoglobin. The polypeptide is Hemoglobin subunit epsilon (HBE1) (Symphalangus syndactylus (Siamang)).